Reading from the N-terminus, the 444-residue chain is MSIIKNPTESALKKPHLNLAIIGHVDHGKSTLTGRLLLETGYVDEKAFAELEAEAKKLGKEDFKYAWIMDRLKEERERGVTIEAMHVGFETPKYFFTIIDLPGHRDFVKNMIVGASQADAALLVVSARPGEFESGVGPQGQTREHLFLAWTLGIRNLIVAVNKMDVVNYDQKRYEQIKGELSKILKILRYDVNKVPFIPVSAVRGDNIKVKSSNMPWYNGPVLLEALDAIEPPPRPIDKPLRLPIQDVFSITGAGTVITGRVESGVVKVGDTIVALPPAKVGDVRSIETHHMKLEEAKAGDNVGINVRGFERQDLKRGDVVGHLNNPPTVAEEIVARIAVLEHPTTIGVGYTPVMHVHTATVPTQIIELISRLDPATGQTVEQKPQFIKRGDVAMVRLKPLKPVVVERFSDLPALGRFSLRDMGRTVAAGQIIEIKPAKVEIKR.

One can recognise a tr-type G domain in the interval 14–235; sequence KPHLNLAIIG…ALDAIEPPPR (222 aa). A G1 region spans residues 23 to 30; it reads GHVDHGKS. 23-30 serves as a coordination point for GTP; that stretch reads GHVDHGKS. Residue serine 30 coordinates Mg(2+). The tract at residues 79 to 83 is G2; it reads GVTIE. The segment at 100–103 is G3; the sequence is DLPG. Residues 100–104 and 162–165 each bind GTP; these read DLPGH and NKMD. Residues 162–165 form a G4 region; the sequence is NKMD. Residues 201 to 203 form a G5 region; that stretch reads SAV.

Belongs to the TRAFAC class translation factor GTPase superfamily. Classic translation factor GTPase family. EF-Tu/EF-1A subfamily.

It is found in the cytoplasm. The catalysed reaction is GTP + H2O = GDP + phosphate + H(+). GTP hydrolase that promotes the GTP-dependent binding of aminoacyl-tRNA to the A-site of ribosomes during protein biosynthesis. The polypeptide is Elongation factor 1-alpha (Caldivirga maquilingensis (strain ATCC 700844 / DSM 13496 / JCM 10307 / IC-167)).